We begin with the raw amino-acid sequence, 576 residues long: Urease subunit alpha (576 aa).

One can recognise a Urease domain in the interval 132-576 (GGIDTHIHFI…LPMAQRYFLF (445 aa)). Ni(2+) contacts are provided by His137, His139, and Lys220. An N6-carboxylysine modification is found at Lys220. His222 is a binding site for substrate. Ni(2+)-binding residues include His249 and His275. His323 acts as the Proton donor in catalysis. Asp363 contributes to the Ni(2+) binding site.

The protein belongs to the metallo-dependent hydrolases superfamily. Urease alpha subunit family. As to quaternary structure, heterotrimer of UreA (gamma), UreB (beta) and UreC (alpha) subunits. Three heterotrimers associate to form the active enzyme. Requires Ni cation as cofactor. Carboxylation allows a single lysine to coordinate two nickel ions.

Its subcellular location is the cytoplasm. The enzyme catalyses urea + 2 H2O + H(+) = hydrogencarbonate + 2 NH4(+). Its pathway is nitrogen metabolism; urea degradation; CO(2) and NH(3) from urea (urease route): step 1/1. The chain is Urease subunit alpha from Paenarthrobacter aurescens (strain TC1).